A 565-amino-acid polypeptide reads, in one-letter code: NAD-dependent malic enzyme (565 aa).

The Proton donor role is filled by Y104. R157 contributes to the NAD(+) binding site. Catalysis depends on K175, which acts as the Proton acceptor. A divalent metal cation is bound by residues E246, D247, and D270. Positions 270 and 418 each coordinate NAD(+).

The protein belongs to the malic enzymes family. As to quaternary structure, homotetramer. It depends on Mg(2+) as a cofactor. The cofactor is Mn(2+).

The catalysed reaction is (S)-malate + NAD(+) = pyruvate + CO2 + NADH. It carries out the reaction oxaloacetate + H(+) = pyruvate + CO2. The chain is NAD-dependent malic enzyme from Enterobacter sp. (strain 638).